The chain runs to 576 residues: 5'-nucleotidase (576 aa).

Residues 1 to 28 form the signal peptide; the sequence is MRPAAAKVPKWLLLALSALLPQWPAASA. D38 and H40 together coordinate Zn(2+). A disulfide bridge links C53 with C59. N55 is a glycosylation site (N-linked (GlcNAc...) asparagine). The Zn(2+) site is built by D87, N119, H222, and H245. N-linked (GlcNAc...) asparagine glycans are attached at residues N313 and N335. Cystine bridges form between C355-C360 and C367-C389. Residue R356 participates in AMP binding. R356 is an IMP binding site. Residues N392 and R397 each contribute to the AMP site. Residues N392 and R397 each contribute to the IMP site. The N-linked (GlcNAc...) asparagine glycan is linked to N405. F419 contributes to the AMP binding site. IMP is bound at residue F419. Residues C478 and C481 are joined by a disulfide bond. The AMP site is built by Y502 and D508. Positions 502 and 508 each coordinate IMP. S551 carries the GPI-anchor amidated serine lipid modification. The propeptide at 552–576 is removed in mature form; sequence AASHYQGSFPLVILSFWAMILILYQ.

Belongs to the 5'-nucleotidase family. Homodimer. Zn(2+) is required as a cofactor. As to expression, expressed at high levels in the placenta, kidney, lung and stomach and at lower levels in the thymus, spleen, skeletal muscle and esophagus.

It is found in the cell membrane. It carries out the reaction a ribonucleoside 5'-phosphate + H2O = a ribonucleoside + phosphate. The enzyme catalyses a 2'-deoxyribonucleoside 5'-phosphate + H2O = a 2'-deoxyribonucleoside + phosphate. It catalyses the reaction dTMP + H2O = thymidine + phosphate. The catalysed reaction is CMP + H2O = cytidine + phosphate. It carries out the reaction IMP + H2O = inosine + phosphate. The enzyme catalyses AMP + H2O = adenosine + phosphate. It catalyses the reaction GMP + H2O = guanosine + phosphate. The catalysed reaction is UMP + H2O = uridine + phosphate. It carries out the reaction dAMP + H2O = 2'-deoxyadenosine + phosphate. The enzyme catalyses dCMP + H2O = 2'-deoxycytidine + phosphate. Its function is as follows. Catalyzes the hydrolysis of nucleotide monophosphates, releasing inorganic phosphate and the corresponding nucleoside. Hydrolyzes IMP. Shows a preference for ribonucleotide monophosphates over their equivalent deoxyribose forms. Although AMP is the preferred substrate can also hydrolyze UMP, GMP, CMP, dAMP, dCMP, dTMP, NAD and NMN. This Mus musculus (Mouse) protein is 5'-nucleotidase (Nt5e).